The primary structure comprises 231 residues: uncharacterized protein (231 aa).

Helical transmembrane passes span 6 to 26 (IKLI…YKYI), 39 to 59 (NIVS…STFS), and 66 to 86 (FCFQ…GYAF).

The protein localises to the cell membrane. This is an uncharacterized protein from Rickettsia prowazekii (strain Madrid E).